We begin with the raw amino-acid sequence, 350 residues long: MALILGIESSCDETAAAVIDSNGASLEARIVAQRIASQDEAHRPYGGVVPEIAARAHAEVLSPMIAAVLADAGIGLDDLDAIAATAGPGLIGGVMVGLVTGKALAMAADKPLIAVNHLEGHALSPRLAEPSLQYPYLLLLVSGGHCQILEVAGVGQFRRLATTIDDALGEAFDKTAKILGLGYPGGPAVERMAREGNPKAVPLPRPLVGSGEPHFSFAGLKSAVMRAKDAGVHGDADIAASFQQAAIDCVIDRTRIALETASPGMTALVVAGGVAANAALRGALEGLAESHGLSLVAPPPKLCTDNAAMIGWAGAERLALGYVDPLDVAARPRWPLDENAAPVRGAGVKA.

Positions 117 and 121 each coordinate Fe cation. Residues 140–144 (LVSGG), Asp173, Gly186, and Asn277 each bind substrate. Asp305 is a binding site for Fe cation.

The protein belongs to the KAE1 / TsaD family. Requires Fe(2+) as cofactor.

It is found in the cytoplasm. It carries out the reaction L-threonylcarbamoyladenylate + adenosine(37) in tRNA = N(6)-L-threonylcarbamoyladenosine(37) in tRNA + AMP + H(+). Required for the formation of a threonylcarbamoyl group on adenosine at position 37 (t(6)A37) in tRNAs that read codons beginning with adenine. Is involved in the transfer of the threonylcarbamoyl moiety of threonylcarbamoyl-AMP (TC-AMP) to the N6 group of A37, together with TsaE and TsaB. TsaD likely plays a direct catalytic role in this reaction. This chain is tRNA N6-adenosine threonylcarbamoyltransferase, found in Novosphingobium aromaticivorans (strain ATCC 700278 / DSM 12444 / CCUG 56034 / CIP 105152 / NBRC 16084 / F199).